The following is a 385-amino-acid chain: UPF0744 protein YSC83 (385 aa).

Belongs to the UPF0744 family.

It localises to the mitochondrion outer membrane. The protein is UPF0744 protein YSC83 (YSC83) of Saccharomyces cerevisiae (strain ATCC 204508 / S288c) (Baker's yeast).